The primary structure comprises 354 residues: Protein OPG055 (354 aa).

It belongs to the orthopoxvirus OPG055 family.

Its function is as follows. Stimulates increases in peripheral microtubule dynamics and may increase the motility of the infected cells, contributing to cell-to-cell spread of the virus. Seems to inhibit the signaling via the GTPase RHOA and DIAPH1/mDia. The protein is Protein OPG055 (OPG055) of Homo sapiens (Human).